Consider the following 131-residue polypeptide: D-ribose pyranase (131 aa).

The active-site Proton donor is His-20. Substrate contacts are provided by residues Asp-28, His-98, and 120-122 (YAN).

Belongs to the RbsD / FucU family. RbsD subfamily. As to quaternary structure, homodecamer.

It localises to the cytoplasm. The catalysed reaction is beta-D-ribopyranose = beta-D-ribofuranose. It participates in carbohydrate metabolism; D-ribose degradation; D-ribose 5-phosphate from beta-D-ribopyranose: step 1/2. In terms of biological role, catalyzes the interconversion of beta-pyran and beta-furan forms of D-ribose. In Bacillus cereus (strain G9842), this protein is D-ribose pyranase.